Here is a 233-residue protein sequence, read N- to C-terminus: MLTRKQYELLRFINERLKESGVPPSFDEMKDALDLRSKSGIHRLITALEERGFIRRLPNRARAIEVIKLPELAASGGGRRGFTPSVIEGNLGKVRRGGGGGADEAERPVAVPVMGRIAAGTPIEALQTCSHTISLPPDMLGAGEHYALEVRGDSMVDAGILDGDMALIQRNPTADTGDIVVALIDDEEATLKRFRRRGASIALEPANAAYEVRILPPNRVQIQGRLVGIYRKY.

A DNA-binding region (H-T-H motif) is located at residues 26–46; that stretch reads FDEMKDALDLRSKSGIHRLIT. Active-site for autocatalytic cleavage activity residues include Ser-154 and Lys-192.

This sequence belongs to the peptidase S24 family. Homodimer.

It catalyses the reaction Hydrolysis of Ala-|-Gly bond in repressor LexA.. Represses a number of genes involved in the response to DNA damage (SOS response), including recA and lexA. In the presence of single-stranded DNA, RecA interacts with LexA causing an autocatalytic cleavage which disrupts the DNA-binding part of LexA, leading to derepression of the SOS regulon and eventually DNA repair. In Nitrobacter winogradskyi (strain ATCC 25391 / DSM 10237 / CIP 104748 / NCIMB 11846 / Nb-255), this protein is LexA repressor.